The chain runs to 1157 residues: Hephaestin (1157 aa).

The first 23 residues, 1–23 (MKAGHLLWALLLMHSLCSLPTDG), serve as a signal peptide directing secretion. 6 Plastocyanin-like domains span residues 24–206 (AIRN…LITC), 218–366 (QRKD…VDSC), 370–559 (PPVE…LLVC), 569–717 (KQKG…VSQC), 730–902 (ASRV…LVIC), and 910–1066 (NGGR…SHEE). The Extracellular segment spans residues 24–1109 (AIRNYYLGIQ…PVKNVEILSS (1086 aa)). Residues Asn-49 and Asn-54 are each glycosylated (N-linked (GlcNAc...) asparagine). Positions 70 and 73 each coordinate Na(+). Residues His-126 and His-128 each contribute to the Cu(2+) site. His-126 is an O2 binding site. Ca(2+)-binding residues include Lys-134, Asp-152, and Asp-153. An N-linked (GlcNAc...) asparagine glycan is attached at Asn-164. Cys-180 and Cys-206 are joined by a disulfide. Cu(2+) is bound by residues His-186 and His-188. His-186 contributes to the O2 binding site. N-linked (GlcNAc...) asparagine glycosylation occurs at Asn-236. Na(+) is bound at residue Ser-265. A disulfide bond links Cys-285 and Cys-366. Residues His-304, Cys-347, and His-352 each coordinate Cu(2+). Tyr-416, Gly-425, and Tyr-428 together coordinate Na(+). Cysteines 533 and 559 form a disulfide. A glycan (N-linked (GlcNAc...) asparagine) is linked at Asn-587. Ser-616 provides a ligand contact to Na(+). Cys-636 and Cys-717 are disulfide-bonded. Cu(2+) contacts are provided by His-655, Cys-698, His-703, and Met-708. Residues Asn-713 and Asn-757 are each glycosylated (N-linked (GlcNAc...) asparagine). Residues Phe-768 and Gly-777 each coordinate Na(+). Cys-876 and Cys-902 are oxidised to a cystine. Asn-930 carries an N-linked (GlcNAc...) asparagine glycan. Cu(2+)-binding residues include His-999, His-1002, His-1004, His-1044, Cys-1045, His-1046, His-1050, and Met-1055. Residues His-1002 and His-1004 each coordinate O2. His-1046 is an O2 binding site. The chain crosses the membrane as a helical span at residues 1110–1130 (ALIAICVVLLLIALALGGVVW). Topologically, residues 1131 to 1157 (YQHRQRKLRRNRRSILDDSFKLLSLKQ) are cytoplasmic. 3 positions are modified to phosphoserine: Ser-1144, Ser-1149, and Ser-1154.

Belongs to the multicopper oxidase family. In terms of assembly, part of a complex composed of SLC40A1/ferroportin, TF/transferrin and HEPH/hephaestin that transfers iron from cells to transferrin. Cu cation serves as cofactor. In terms of tissue distribution, highly expressed in small intestine and colon.

It localises to the basolateral cell membrane. It catalyses the reaction 4 Fe(2+) + O2 + 4 H(+) = 4 Fe(3+) + 2 H2O. In terms of biological role, plasma membrane ferroxidase that mediates the extracellular conversion of ferrous/Fe(2+) iron into its ferric/Fe(3+) form. Couples ferroportin which specifically exports ferrous/Fe(2+) iron from cells to transferrin that only binds and shuttles extracellular ferric/Fe(3+) iron throughout the body. By helping iron transfer from cells to blood mainly contributes to dietary iron absorption by the intestinal epithelium and more generally regulates iron levels in the body. The sequence is that of Hephaestin from Rattus norvegicus (Rat).